We begin with the raw amino-acid sequence, 153 residues long: Arginine repressor (153 aa).

This sequence belongs to the ArgR family.

It localises to the cytoplasm. It participates in amino-acid biosynthesis; L-arginine biosynthesis [regulation]. Regulates arginine biosynthesis genes. The chain is Arginine repressor from Syntrophomonas wolfei subsp. wolfei (strain DSM 2245B / Goettingen).